Here is a 110-residue protein sequence, read N- to C-terminus: MHMTDVLPAGDISKAVEAFAAPDSFNHKKFFEMCGLKSKGPDVMKQVFGILDQDRSGFIEEDELCLMLKGFTPNARSLSVKETTALLAAGDKDGDGKIGMDEFVTLVSES.

EF-hand domains lie at 39 to 74 (KGPDVMKQVFGILDQDRSGFIEEDELCLMLKGFTPN) and 78 to 110 (LSVKETTALLAAGDKDGDGKIGMDEFVTLVSES). 11 residues coordinate Ca(2+): aspartate 52, aspartate 54, serine 56, phenylalanine 58, glutamate 60, glutamate 63, aspartate 91, aspartate 93, aspartate 95, lysine 97, and glutamate 102.

This sequence belongs to the parvalbumin family.

In terms of biological role, in muscle, parvalbumin is thought to be involved in relaxation after contraction. It binds two calcium ions. The polypeptide is Parvalbumin alpha (Aquarana catesbeiana (American bullfrog)).